The chain runs to 154 residues: Nuclear cap-binding protein subunit 2-A (154 aa).

MRNA is bound by residues Tyr10, Tyr33, 102–106 (RVDWD), 113–117 (RQYGR), and 123–124 (QV). The RRM domain maps to 30 to 108 (STLYVGNLSF…RLIRVDWDAG (79 aa)).

Belongs to the RRM NCBP2 family. Component of the nuclear cap-binding complex (CBC), a heterodimer composed of Cbp80 and Cbp20 that interacts with m7GpppG-capped RNA. Interacts with Ars2.

It is found in the nucleus. Its function is as follows. Component of the cap-binding complex (CBC), which binds co-transcriptionally to the 5' cap of pre-mRNAs and is involved in various processes such as pre-mRNA splicing and RNA-mediated gene silencing (RNAi). The CBC complex is involved in miRNA-mediated RNA interference via its interaction with Ars2 and is required for primary microRNAs (miRNAs) processing. Also involved in innate immunity via the short interfering RNAs (siRNAs) processing machinery by restricting the viral RNA production. In the CBC complex, Cbp20 recognizes and binds capped RNAs (m7GpppG-capped RNA) but requires Cbp80 to stabilize the movement of its N-terminal loop and lock the CBC into a high affinity cap-binding state with the cap structure. The chain is Nuclear cap-binding protein subunit 2-A (Cbp20-A) from Drosophila virilis (Fruit fly).